A 130-amino-acid chain; its full sequence is Small ribosomal subunit protein uS9 (130 aa).

Belongs to the universal ribosomal protein uS9 family.

This is Small ribosomal subunit protein uS9 from Sodalis glossinidius (strain morsitans).